We begin with the raw amino-acid sequence, 182 residues long: NADH-quinone oxidoreductase subunit I (182 aa).

4Fe-4S ferredoxin-type domains follow at residues 50 to 82 (IILS…LQKA) and 92 to 121 (EFFR…MTPD). Positions 62, 65, 68, 72, 101, 104, 107, and 111 each coordinate [4Fe-4S] cluster.

This sequence belongs to the complex I 23 kDa subunit family. As to quaternary structure, NDH-1 is composed of 14 different subunits. Subunits NuoA, H, J, K, L, M, N constitute the membrane sector of the complex. It depends on [4Fe-4S] cluster as a cofactor.

The protein localises to the cell inner membrane. It carries out the reaction a quinone + NADH + 5 H(+)(in) = a quinol + NAD(+) + 4 H(+)(out). Functionally, NDH-1 shuttles electrons from NADH, via FMN and iron-sulfur (Fe-S) centers, to quinones in the respiratory chain. The immediate electron acceptor for the enzyme in this species is believed to be ubiquinone. Couples the redox reaction to proton translocation (for every two electrons transferred, four hydrogen ions are translocated across the cytoplasmic membrane), and thus conserves the redox energy in a proton gradient. The polypeptide is NADH-quinone oxidoreductase subunit I (Psychrobacter cryohalolentis (strain ATCC BAA-1226 / DSM 17306 / VKM B-2378 / K5)).